A 188-amino-acid polypeptide reads, in one-letter code: Peptide methionine sulfoxide reductase MsrA (188 aa).

The tract at residues 1–25 is disordered; that stretch reads MEGNEKAEQKNATSEESTDIFENPG. The active site involves cysteine 37.

The protein belongs to the MsrA Met sulfoxide reductase family.

It carries out the reaction L-methionyl-[protein] + [thioredoxin]-disulfide + H2O = L-methionyl-(S)-S-oxide-[protein] + [thioredoxin]-dithiol. The catalysed reaction is [thioredoxin]-disulfide + L-methionine + H2O = L-methionine (S)-S-oxide + [thioredoxin]-dithiol. Functionally, has an important function as a repair enzyme for proteins that have been inactivated by oxidation. Catalyzes the reversible oxidation-reduction of methionine sulfoxide in proteins to methionine. The chain is Peptide methionine sulfoxide reductase MsrA from Methanosarcina acetivorans (strain ATCC 35395 / DSM 2834 / JCM 12185 / C2A).